The primary structure comprises 349 residues: Actin cytoskeleton-regulatory complex protein END3 (349 aa).

2 EH domains span residues glutamate 8–asparagine 98 and aspartate 130–lysine 222. An EF-hand 1 domain is found at leucine 40–methionine 75. Ca(2+)-binding residues include aspartate 53, aspartate 55, aspartate 57, asparagine 59, and glutamate 64. Residues lysine 96–lysine 105 form a polyphosphoinositide (PIP2)-binding region. The EF-hand 2 domain occupies aspartate 146 to asparagine 164. The disordered stretch occupies residues tyrosine 226 to serine 265. Positions lysine 236 to arginine 248 are enriched in basic and acidic residues. Residues aspartate 249 to serine 265 show a composition bias toward low complexity. Residue serine 276 is modified to Phosphoserine. 2 consecutive repeat copies span residues serine 276 to tyrosine 295 and serine 315 to leucine 334. Residues serine 276–leucine 334 are 2 X 20 AA approximate repeats. Positions leucine 307–asparagine 349 form a coiled coil.

The protein belongs to the END3 family. Component of the PAN1 actin cytoskeleton-regulatory complex composed of at least END3, PAN1, and SLA1. Interacts with SCD5, SLA2 and YAP1802. Interacts directly with PAN1; the interaction with PAN1 is prevented by PAN1 phosphorylation by PKR1.

The protein resides in the cell membrane. It is found in the endosome membrane. The protein localises to the cytoplasm. Its subcellular location is the cytoskeleton. It localises to the actin patch. In terms of biological role, component of the PAN1 actin cytoskeleton-regulatory complex required for the internalization of endosomes during actin-coupled endocytosis. The complex links the site of endocytosis to the cell membrane-associated actin cytoskeleton. Mediates uptake of external molecules and vacuolar degradation of plasma membrane proteins. Plays a role in the proper organization of the cell membrane-associated actin cytoskeleton and promotes its destabilization. END3 regulates PAN1 function by preventing phosphorylation of PAN1 by PKR1 and is also involved in the correct localization of SLA1 to the cell cortex, in the bipolar budding of diploid cells and the correct distribution of chitin at the cell surface. The polypeptide is Actin cytoskeleton-regulatory complex protein END3 (END3) (Saccharomyces cerevisiae (strain ATCC 204508 / S288c) (Baker's yeast)).